The following is a 411-amino-acid chain: Glutamate dehydrogenase A (411 aa).

The active site involves Lys-102.

This sequence belongs to the Glu/Leu/Phe/Val dehydrogenases family.

It carries out the reaction L-glutamate + NAD(+) + H2O = 2-oxoglutarate + NH4(+) + NADH + H(+). It catalyses the reaction L-glutamate + NADP(+) + H2O = 2-oxoglutarate + NH4(+) + NADPH + H(+). This is Glutamate dehydrogenase A (GDHA) from Nicotiana plumbaginifolia (Leadwort-leaved tobacco).